The following is a 155-amino-acid chain: MQIQQIEGGFGAQDARIALVVSRFNDFIGQKLVEGAIDCIRRNGGSEENIAIYRCPGAFELPMVAKKVALTGKYDAVVTLGAIIRGSTPHFDVIAAEATKGIAQASLETGVPIAFGVLTTENIEQAIERAGTKAGNKGFDAALTAIEMINLYRAM.

5-amino-6-(D-ribitylamino)uracil is bound by residues F24, 58-60 (AFE), and 82-84 (AII). Residue 87–88 (ST) participates in (2S)-2-hydroxy-3-oxobutyl phosphate binding. Residue H90 is the Proton donor of the active site. Position 115 (F115) interacts with 5-amino-6-(D-ribitylamino)uracil. R129 serves as a coordination point for (2S)-2-hydroxy-3-oxobutyl phosphate.

This sequence belongs to the DMRL synthase family.

The catalysed reaction is (2S)-2-hydroxy-3-oxobutyl phosphate + 5-amino-6-(D-ribitylamino)uracil = 6,7-dimethyl-8-(1-D-ribityl)lumazine + phosphate + 2 H2O + H(+). It functions in the pathway cofactor biosynthesis; riboflavin biosynthesis; riboflavin from 2-hydroxy-3-oxobutyl phosphate and 5-amino-6-(D-ribitylamino)uracil: step 1/2. Its function is as follows. Catalyzes the formation of 6,7-dimethyl-8-ribityllumazine by condensation of 5-amino-6-(D-ribitylamino)uracil with 3,4-dihydroxy-2-butanone 4-phosphate. This is the penultimate step in the biosynthesis of riboflavin. The protein is 6,7-dimethyl-8-ribityllumazine synthase of Chlorobium phaeovibrioides (strain DSM 265 / 1930) (Prosthecochloris vibrioformis (strain DSM 265)).